The sequence spans 510 residues: Chorion transcription factor Cf2 (510 aa).

The segment covering 1-10 (MIKSTTNPQE) has biased composition (polar residues). The segment at 1–40 (MIKSTTNPQEQRLPRPEDQSPAPPPPPPSSATTSTAAPAT) is disordered. Over residues 30–40 (SATTSTAAPAT) the composition is skewed to low complexity. C2H2-type zinc fingers lie at residues 74 to 97 (HYCP…QLCH) and 125 to 148 (HPCF…RLAH). Residues 222-237 (PEEQHHQQQLQAEHHH) are compositionally biased toward basic and acidic residues. Residues 222–279 (PEEQHHQQQLQAEHHHQQQHQQQQQQQQQQQELLEQQQREMQEQAQQQQVHHHQQDQD) form a disordered region. A compositionally biased stretch (low complexity) spans 240–257 (QHQQQQQQQQQQQELLEQ). 5 C2H2-type zinc fingers span residues 366 to 388 (HKCP…RKIH), 401 to 423 (YTCS…TRIH), 429 to 451 (FRCG…LTTH), 457 to 479 (FHCG…IRTH), and 485 to 508 (YTCP…TKLH).

As to expression, isoform I is found in embryos, pupae and adult somatic tissue; isoform II occurs in embryos, pupae, ovaries, testis and to a lesser extent in adult somatic tissue.

It is found in the nucleus. In terms of biological role, transcriptional regulator; binds to the promoter region of Cp15. Also binds to its own promoter, thus having a probable autoregulatory role. The polypeptide is Chorion transcription factor Cf2 (Cf2) (Drosophila melanogaster (Fruit fly)).